The primary structure comprises 922 residues: Protein translocase subunit SecA (922 aa).

ATP-binding positions include Gln-87, 105 to 109, and Asp-516; that span reads GEGKT. The segment at 867–912 is disordered; sequence YTAPTETGEPETLPDPRTAGAGGDGLNLPEGVRIGRNDPCPCGSGK. Residues Cys-906, Cys-908, Cys-917, and His-918 each contribute to the Zn(2+) site.

This sequence belongs to the SecA family. As to quaternary structure, monomer and homodimer. Part of the essential Sec protein translocation apparatus which comprises SecA, SecYEG and auxiliary proteins SecDF-YajC and YidC. It depends on Zn(2+) as a cofactor.

It is found in the cell inner membrane. The protein localises to the cytoplasm. The enzyme catalyses ATP + H2O + cellular proteinSide 1 = ADP + phosphate + cellular proteinSide 2.. Functionally, part of the Sec protein translocase complex. Interacts with the SecYEG preprotein conducting channel. Has a central role in coupling the hydrolysis of ATP to the transfer of proteins into and across the cell membrane, serving both as a receptor for the preprotein-SecB complex and as an ATP-driven molecular motor driving the stepwise translocation of polypeptide chains across the membrane. This Paracidovorax citrulli (strain AAC00-1) (Acidovorax citrulli) protein is Protein translocase subunit SecA.